The primary structure comprises 1161 residues: Lysine-specific demethylase 2A (1161 aa).

At Ser28 the chain carries Phosphoserine. One can recognise a JmjC domain in the interval 148–316; it reads FSHTRLENMV…MQLKIYSIED (169 aa). Thr209 provides a ligand contact to substrate. Residues His212 and Asp214 each contribute to the Fe cation site. Lys229 contributes to the substrate binding site. Residue His284 coordinates Fe cation. Residues Ser390 and Ser394 each carry the phosphoserine modification. The segment covering 419 to 433 has biased composition (low complexity); that stretch reads KTLSGDSSSDSTRGS. A disordered region spans residues 419 to 445; it reads KTLSGDSSSDSTRGSHNGQVWDPQCSP. Position 444 is a phosphoserine (Ser444). Lys505 participates in a covalent cross-link: Glycyl lysine isopeptide (Lys-Gly) (interchain with G-Cter in SUMO2). The tract at residues 532–557 is disordered; sequence VPTIPITKPHTMKPAPRLTPVRPAAA. Position 550 is a phosphothreonine (Thr550). A Phosphoserine modification is found at Ser558. The CXXC-type zinc finger occupies 564-610; sequence ARRRRVRCRKCKACVQGECGVCHYCRDMKKFGGPGRMKQSCVLRQCL. Positions 571, 574, 577, 582, 585, 588, 604, 609, 620, and 623 each coordinate Zn(2+). Residues 617-678 form a PHD-type zinc finger; that stretch reads SVTCSLCGEV…CWECPKCYQE (62 aa). Phosphothreonine is present on Thr632. Zn(2+) is bound by residues Cys642, Cys645, His650, Cys653, Cys672, and Cys675. Ser692 carries the post-translational modification Phosphoserine. The tract at residues 705-789 is disordered; that stretch reads LRSCEEPLTP…PSGKKELSEV (85 aa). Thr713 is subject to Phosphothreonine. Residues Ser718 and Ser731 each carry the phosphoserine modification. 2 stretches are compositionally biased toward basic and acidic residues: residues 746–757 and 771–789; these read SDHHSASRDERF and TMVR…LSEV. Residues Ser825, Ser868, and Ser882 each carry the phosphoserine modification. Residues 840–886 form a disordered region; the sequence is CPARNPQHGDEEGLGGEEEEEEEEEEDDSAEEGGAARLNGRGSWAQD. Residues 851–870 are compositionally biased toward acidic residues; the sequence is EGLGGEEEEEEEEEEDDSAE. Positions 888 to 935 constitute an F-box domain; it reads DESWMQREVWMSVFRYLSRKELCECMRVCKTWYKWCCDKRLWTKIDLS. 2 LRR repeats span residues 960–981 and 983–1009; these read WTNI…LKDL and LAGC…DLRW. The residue at position 1019 (Arg1019) is an ADP-ribosylarginine. LRR repeat units lie at residues 1047–1072, 1073–1102, 1103–1127, and 1128–1155; these read GLDI…DLSH, CSHL…NMAG, CNKL…DLRG, and CKQI…SDEK.

The protein belongs to the JHDM1 histone demethylase family. As to quaternary structure, part of a SCF (SKP1-cullin-F-box) protein ligase complex. Interacts with CBX5/HP1A; the interaction promotes CBX5 localization to chromatin. The SKP1-KDM2A complex interacts with UBB. Fe(2+) serves as cofactor. Mono-ADP-ribosylated at Arg-1019 in response to DNA damage, leading to displacement from chromatin, resulting in increased dimethylation of histone H3 at 'Lys-36'.

It is found in the nucleus. Its subcellular location is the nucleoplasm. The protein localises to the chromosome. It carries out the reaction N(6),N(6)-dimethyl-L-lysyl(36)-[histone H3] + 2 2-oxoglutarate + 2 O2 = L-lysyl(36)-[histone H3] + 2 formaldehyde + 2 succinate + 2 CO2. Functionally, histone demethylase that specifically demethylates 'Lys-36' of histone H3, thereby playing a central role in histone code. Preferentially demethylates dimethylated H3 'Lys-36' residue while it has weak or no activity for mono- and tri-methylated H3 'Lys-36'. May also recognize and bind to some phosphorylated proteins and promote their ubiquitination and degradation. Required to maintain the heterochromatic state. Associates with centromeres and represses transcription of small non-coding RNAs that are encoded by the clusters of satellite repeats at the centromere. Required to sustain centromeric integrity and genomic stability, particularly during mitosis. Regulates circadian gene expression by repressing the transcriptional activator activity of CLOCK-BMAL1 heterodimer and RORA in a catalytically-independent manner. The chain is Lysine-specific demethylase 2A (Kdm2a) from Mus musculus (Mouse).